Consider the following 322-residue polypeptide: Phosphatidylserine decarboxylase proenzyme (322 aa).

Residues aspartate 90, histidine 147, and serine 254 each act as charge relay system; for autoendoproteolytic cleavage activity in the active site. Serine 254 acts as the Schiff-base intermediate with substrate; via pyruvic acid; for decarboxylase activity in catalysis. Residue serine 254 is modified to Pyruvic acid (Ser); by autocatalysis. Positions 293 to 322 (PDAEPAPLPAEEIEAEHDASPLVDDKKDQV) are disordered. A compositionally biased stretch (basic and acidic residues) spans 308-322 (EHDASPLVDDKKDQV).

Belongs to the phosphatidylserine decarboxylase family. PSD-B subfamily. Prokaryotic type I sub-subfamily. In terms of assembly, heterodimer of a large membrane-associated beta subunit and a small pyruvoyl-containing alpha subunit. The cofactor is pyruvate. In terms of processing, is synthesized initially as an inactive proenzyme. Formation of the active enzyme involves a self-maturation process in which the active site pyruvoyl group is generated from an internal serine residue via an autocatalytic post-translational modification. Two non-identical subunits are generated from the proenzyme in this reaction, and the pyruvate is formed at the N-terminus of the alpha chain, which is derived from the carboxyl end of the proenzyme. The autoendoproteolytic cleavage occurs by a canonical serine protease mechanism, in which the side chain hydroxyl group of the serine supplies its oxygen atom to form the C-terminus of the beta chain, while the remainder of the serine residue undergoes an oxidative deamination to produce ammonia and the pyruvoyl prosthetic group on the alpha chain. During this reaction, the Ser that is part of the protease active site of the proenzyme becomes the pyruvoyl prosthetic group, which constitutes an essential element of the active site of the mature decarboxylase.

It localises to the cell membrane. It carries out the reaction a 1,2-diacyl-sn-glycero-3-phospho-L-serine + H(+) = a 1,2-diacyl-sn-glycero-3-phosphoethanolamine + CO2. It participates in phospholipid metabolism; phosphatidylethanolamine biosynthesis; phosphatidylethanolamine from CDP-diacylglycerol: step 2/2. Catalyzes the formation of phosphatidylethanolamine (PtdEtn) from phosphatidylserine (PtdSer). The protein is Phosphatidylserine decarboxylase proenzyme of Escherichia coli O45:K1 (strain S88 / ExPEC).